The chain runs to 164 residues: Diphosphoinositol polyphosphate phosphohydrolase 3-beta (164 aa).

Residues arginine 9, 17–19 (KKR), and 38–40 (SSR) contribute to the substrate site. One can recognise a Nudix hydrolase domain in the interval 17–144 (KKRAACLCFR…VHAEYLEKLK (128 aa)). Mg(2+) contacts are provided by glycine 49 and glutamate 65. The Nudix box signature appears at 50–71 (GGMEPEEEPGGAAVREVYEEAG). Glutamate 68 acts as the Proton acceptor in catalysis. A Mg(2+)-binding site is contributed by glutamate 69. Substrate contacts are provided by residues 89 to 91 (RKH), arginine 115, and lysine 133. Residues 144–164 (KLGGSPTNGNSMAPSSPDSDP) form a disordered region. Positions 148 to 164 (SPTNGNSMAPSSPDSDP) are enriched in polar residues.

The protein belongs to the Nudix hydrolase family. DIPP subfamily. Mg(2+) serves as cofactor. It depends on Mn(2+) as a cofactor. In terms of tissue distribution, mainly expressed in testis and, at lower level in brain. According to PubMed:12121577, it is also expressed in pancreas and weakly expressed in thymus, prostate, ovary, lung, small intestine and heart.

It localises to the cytoplasm. The catalysed reaction is diphospho-myo-inositol polyphosphate + H2O = myo-inositol polyphosphate + phosphate.. It carries out the reaction P(1),P(6)-bis(5'-adenosyl) hexaphosphate + H2O = adenosine 5'-pentaphosphate + AMP + 2 H(+). The enzyme catalyses P(1),P(5)-bis(5'-adenosyl) pentaphosphate + H2O = adenosine 5'-tetraphosphate + AMP + 2 H(+). Cleaves a beta-phosphate from the diphosphate groups in PP-InsP5 (diphosphoinositol pentakisphosphate), suggesting that it may play a role in signal transduction. Also able to catalyze the hydrolysis of dinucleoside oligophosphates, with Ap6A and Ap5A being the preferred substrates. The major reaction products are ADP and p4a from Ap6A and ADP and ATP from Ap5A. Also able to hydrolyze 5-phosphoribose 1-diphosphate. The protein is Diphosphoinositol polyphosphate phosphohydrolase 3-beta of Homo sapiens (Human).